Reading from the N-terminus, the 2227-residue chain is MNMSRQGIFQTVGSGLDHILSLADIEEEQMIQSVDRTAVTGASYFTSVDQSSVHTAEVGSHQVEPLKTSVDKPGSKKTQGEKFFLIHSADWLTTHALFHEVAKLDVVKLLYNEQFAVQGLLRYHTYARFGIEIQVQINPTPFQQGGLICAMVPGDQSYGSIASLTVYPHGLLNCNINNVVRIKVPFIYTRGAYHFKDPQYPVWELTIRVWSELNIGTGTSAYTSLNVLARFTDLELHGLTPLSTQMMRNEFRVSTTENVVNLSNYEDARAKMSFALDQEDWKSDPSQGGRIKITHFTTWTSIPTLAAQFPFNASDSVGQQIKVIPVDPYFFQMTNSNPDQKCITALASICQMFCFWRGDLVFDFQVFPTKYHSGRLLFCFVPGNELIDVSGITLKQATTAPCAVMDITGVQSTLRFRVPWISDTPYRVNRYTKSAHQKGEYTAIGKLIVYCYNRLTSPSNVASHVRVNVYLSAINLECFAPLYHAMDVTTQVGDDSGGFSTTVSTEQNVPDPQVGITTMRDLKGRANRGKMDVSGVQAPVGAITTIEDPVLAKKVPETFPELKPGESRHTSDHMSIYKFMGRSHFLCTFTFNSNNKEYTFPITLSSTSNPPHGLPSTLRWFFNLFQLYRGPLDLTIIITGATDVDGMAWFTPVGLAVDTPWVEKESALSIDYKTALGAVRFNTRRTGNIQIRLPWYSYLYAVSGALDGLGDKTDSTFGLVSIQIANYNHSDEYLSFSCYLSVTEQSEFYFPRAPLNSNAMLSTETMMSRIAAGDLESSVDDPRSEEDRRFESHIESRKPYKELRLEVGKQRLKYAQEELSNEVLPPPRKMKGLFSQAKISLFYTEDHEIMKFSWRGVTADTRALRRFGFSLAAGRSVWTLEMDAGVLTGRLVRLNDEKWTEMKDDKIVSLVEKFTSNKHWSKVNFPHGMLDLEEIAANSKDFPNMSETDLCFLLHWLNPKKINLADRMLGLSGVQEIKEQGIGLIAECRTFLDSIAGTLKSMMFGFHHSVTVEIINTVLCFVKSGILLYVVQQLNQDEHSHIIGLLRVMNYADIGCSVISCGKVFSKMLETVFNWQMDSRMMELRTQSFSNWLRDICSGITIFKSFKDAIYWLYTKLKDFYDVNYGKKKDVLNVLKDNQQKIERAIEEADNFCILQIQDVEKFEQYQKGVDLIQKLRTVHSMAQVDPSLMIHLSPLRDCIARVHQKLKNLGSINQAMVTRCEPVVCYLYGKRGGGKSLTSIALATKICKHYGVEPEKNIYTKPVASDYWDGYSGQLVCIIDDIGQNTTDEDWSDFCQLVSGCPMRLNMASLEEKGRHFSSPFIIATSNWSNPSPKTVYVKEAIDRRLHFKIEVKPASFFKNPHNDMLNVNLAKTNDAIKDMSCVDLIMDGHNVSLMDLLSSLVMTVEIRKQNMTEFMELWSQGISDDDNDSAVAEFFQSFPSGEPSNSKLSSFFQSVTNHKWVAVGAAVGILGVLVGGWFVYKHFSRKEEEPIPTEGVYHGVTKPKQVIKLDADPVESQSTLEIAGLVRKNLVQFGVGEKNGCVRWVMNALGVKDDWLLVPSHAYKFEKDYEMMEFYFNRGGTYYSISAGNVVIQSLDVGFQDVVLMKVPTIPNFRDITEHFIKKGDVPRALNRLATFGQPVNGTPMLISEGPLKMEEKATYVHKKNDGTTVDLTVDQAWRGKGEGLPGMCGGALVSSNQSIQNAILGIHVAGGNSILVAKLVTQEMFQNIDKKIESQRIMKVEFTQCSMNVVSKTLFRKSPIHHHIDKDMINFPAAMPFSRAEIDPMAVMLSKYSLPMVEEPEGYKDVSVFFQNKVMGKSVLVDDFLDLDMAITGAPGIDAINMDSSPGFPYVQERLTKRDLIWLDENGLLLGIHPRLAQRILFNTVMMENCSDLDVIFTTCPKDELRPLDKVLESKTRAIDACPLDYTILCRMYWGPAISYFHLNPGFHTGVAIGIDPDRQWDELFKTMIRFGDVGLDLDFSAFDASLSPFMIREAGRIMSEISGTPSHFGTALINTIIYSKHLLYNCCYHVYGSMPSGSPCTALLNSIINNINLYYVFSKIFRKSPVFFSQAVRILCYGDDVLIVFSRDIQIDNLDQIGQKIVHEFKQLGMTATSADKTVPQLKPVSELTFLKRSFNLVEDRVRPAISEKTIWSLVAWQRSNAEFEQNLENAQWFAFMHGFEFYQKFYYFVQSCLEKEMIEYRLKSYDWWRMRFYDQCFVCDLS.

2 short sequence motifs ((L)YPX(n)L motif) span residues 167 to 171 (YPHGL) and 200 to 205 (YPVWEL). The tract at residues 766-836 (MMSRIAAGDL…PRKMKGLFSQ (71 aa)) is involved in P1-2A pentamerization. Residues 1010–1030 (VTVEIINTVLCFVKSGILLYV) form a helical membrane-spanning segment. Positions 1043–1070 (IGLLRVMNYADIGCSVISCGKVFSKMLE) are membrane-penetrating ability. The stretch at 1127–1152 (KKKDVLNVLKDNQQKIERAIEEADNF) forms a coiled coil. Residues 1204 to 1366 (HQKLKNLGSI…SFFKNPHNDM (163 aa)) enclose the SF3 helicase domain. 1230-1237 (GKRGGGKS) is an ATP binding site. The helical transmembrane segment at 1462-1482 (WVAVGAAVGILGVLVGGWFVY) threads the bilayer. Tyr1499 is subject to O-(5'-phospho-RNA)-tyrosine. Positions 1514–1728 (DPVESQSTLE…VAKLVTQEMF (215 aa)) constitute a Peptidase C3 domain. Catalysis depends on for protease 3C activity residues His1563, Asp1603, and Cys1691. The region spanning 1976 to 2097 (DVGLDLDFSA…VFSRDIQIDN (122 aa)) is the RdRp catalytic domain. Asp2083 (for RdRp activity) is an active-site residue.

The protein belongs to the picornaviridae polyprotein family. Homodimer. Homomultimer; probably interacts with membranes in a multimeric form. Seems to assemble into amyloid-like fibers. In terms of assembly, homodimer. Monomer. Interacts with protein 3CD. As to quaternary structure, interacts with host ACBD3. Interacts with protein 3AB. In terms of assembly, interacts with human MAVS. As to quaternary structure, homodimer; disulfide-linked. Homopentamer. Homooligomer. In terms of assembly, interacts with capsid protein VP2. Interacts with capsid protein VP3. As to quaternary structure, interacts with capsid protein VP1. Interacts with capsid protein VP3. Interacts with capsid protein VP1. Interacts with capsid protein VP2. Post-translationally, specific enzymatic cleavages by viral protease in vivo yield a variety of precursors and mature proteins. Polyprotein processing intermediates are produced, such as P1-2A which is a functional precursor of the structural proteins, VP0 which is a VP4-VP2 precursor, VP1-2A precursor, 3ABC precursor which is a stable and catalytically active precursor of 3A, 3B and 3C proteins, 3AB and 3CD precursors. The assembly signal 2A is removed from VP1-2A by a host protease, possibly host Cathepsin L. This cleavage occurs over a region of 3 amino-acids probably generating VP1 proteins with heterogeneous C-termini. During virion maturation, immature virions are rendered infectious following cleavage of VP0 into VP4 and VP2. This maturation seems to be an autocatalytic event triggered by the presence of RNA in the capsid and is followed by a conformational change of the particle. In terms of processing, the assembly signal 2A is removed from VP1-2A by a host protease, possibly host Cathepsin L in naked virions. This cleavage does not occur in enveloped virions. This cleavage occurs over a region of 3 amino-acids probably generating VP1 proteins with heterogeneous C-termini. Post-translationally, VPg is uridylylated prior to priming replication into VPg-pUpU. Unlike other picornaviruses, does not seem to be myristoylated.

The protein resides in the virion. It localises to the host endosome. The protein localises to the host multivesicular body. It is found in the host membrane. Its subcellular location is the host mitochondrion outer membrane. The protein resides in the host cytoplasm. It localises to the host cytoplasmic vesicle membrane. It carries out the reaction RNA(n) + a ribonucleoside 5'-triphosphate = RNA(n+1) + diphosphate. The catalysed reaction is a ribonucleoside 5'-triphosphate + H2O = a ribonucleoside 5'-diphosphate + phosphate + H(+). It catalyses the reaction Selective cleavage of Gln-|-Gly bond in the poliovirus polyprotein. In other picornavirus reactions Glu may be substituted for Gln, and Ser or Thr for Gly.. In terms of biological role, capsid proteins VP1, VP2, and VP3 form a closed capsid enclosing the viral positive strand RNA genome. All these proteins contain a beta-sheet structure called beta-barrel jelly roll. Together they form an icosahedral capsid (T=3) composed of 60 copies of each VP1, VP2, and VP3, with a diameter of approximately 300 Angstroms. VP1 is situated at the 12 fivefold axes, whereas VP2 and VP3 are located at the quasi-sixfold axes. The naked capsid interacts with the host receptor HAVCR1 to provide virion attachment to and probably entry into the target cell. VP0 precursor is a component of the immature procapsids. Its function is as follows. Plays a role in the assembly of the 12 pentamers into an icosahedral structure. Has not been detected in mature virions, supposedly owing to its small size. Functionally, precursor component of immature procapsids that corresponds to an extended form of the structural protein VP1. After maturation, possibly by the host Cathepsin L, the assembly signal 2A is cleaved to give rise to the mature VP1 protein. In terms of biological role, functions as a viroporin. Affects membrane integrity and causes an increase in membrane permeability. Involved in host intracellular membrane rearrangements probably to give rise to the viral factories. Does not disrupt calcium homeostasis or glycoprotein trafficking. Antagonizes the innate immune response of the host by suppressing IFN-beta synthesis, which it achieves by interfering with the RIG-I/IFIH1 pathway. Affects membrane integrity and causes an increase in membrane permeability. Its function is as follows. Associates with and induces structural rearrangements of intracellular membranes. Displays RNA-binding activity. Functionally, the precursor 3ABC is targeted to the mitochondrial membrane where protease 3C activity cleaves and inhibits the host antiviral protein MAVS, thereby disrupting activation of IRF3 through the IFIH1/MDA5 pathway. In vivo, the protease activity of 3ABC precursor is more efficient in cleaving the 2BC precursor than that of protein 3C. The 3ABC precursor may therefore play a role in the proteolytic processing of the polyprotein. Possible viroporin. In terms of biological role, interacts with the 3CD precursor and with RNA structures found at both the 5'- and 3'-termini of the viral genome. Since the 3AB precursor contains the hydrophobic domain 3A, it probably anchors the whole viral replicase complex to intracellular membranes on which viral RNA synthesis occurs. May serve as membrane anchor to the 3AB and 3ABC precursors via its hydrophobic domain. May interact with RNA. Its function is as follows. Acts as a primer for viral RNA replication and remains covalently bound to viral genomic RNA. VPg is uridylylated prior to priming replication into VPg-pUpU. The VPg-pUpU is then used as primer on the genomic RNA poly(A) by the RNA-dependent RNA polymerase to replicate the viral genome. Functionally, cysteine protease that generates mature viral proteins from the precursor polyprotein. In addition to its proteolytic activity, it binds to viral RNA, and thus influences viral genome replication. RNA and substrate bind cooperatively to the protease. Cleaves IKBKG/NEMO to impair innate immune signaling. Cleaves host PABPC1 which may participate in the switch of viral translation to RNA synthesis. In terms of biological role, interacts with the 3AB precursor and with RNA structures found at both the 5'- and 3'-termini of the viral genome. Disrupts TLR3 signaling by degrading the host adapter protein TICAM1/TRIF. RNA-directed RNA polymerase 3D-POL replicates genomic and antigenomic RNA by recognizing replications specific signals. This Human hepatitis A virus genotype IIB (isolate SLF88) (HHAV) protein is Genome polyprotein.